The primary structure comprises 121 residues: Large ribosomal subunit protein bL20 (121 aa).

It belongs to the bacterial ribosomal protein bL20 family.

In terms of biological role, binds directly to 23S ribosomal RNA and is necessary for the in vitro assembly process of the 50S ribosomal subunit. It is not involved in the protein synthesizing functions of that subunit. This Orientia tsutsugamushi (strain Boryong) (Rickettsia tsutsugamushi) protein is Large ribosomal subunit protein bL20.